Reading from the N-terminus, the 148-residue chain is Large ribosomal subunit protein uL13 (148 aa).

The protein belongs to the universal ribosomal protein uL13 family. In terms of assembly, part of the 50S ribosomal subunit.

In terms of biological role, this protein is one of the early assembly proteins of the 50S ribosomal subunit, although it is not seen to bind rRNA by itself. It is important during the early stages of 50S assembly. This is Large ribosomal subunit protein uL13 from Ureaplasma urealyticum serovar 10 (strain ATCC 33699 / Western).